Reading from the N-terminus, the 127-residue chain is Holo-[acyl-carrier-protein] synthase (127 aa).

2 residues coordinate Mg(2+): Asp-8 and Glu-56.

This sequence belongs to the P-Pant transferase superfamily. AcpS family. Mg(2+) serves as cofactor.

The protein localises to the cytoplasm. The enzyme catalyses apo-[ACP] + CoA = holo-[ACP] + adenosine 3',5'-bisphosphate + H(+). Transfers the 4'-phosphopantetheine moiety from coenzyme A to a Ser of acyl-carrier-protein. The chain is Holo-[acyl-carrier-protein] synthase from Caldanaerobacter subterraneus subsp. tengcongensis (strain DSM 15242 / JCM 11007 / NBRC 100824 / MB4) (Thermoanaerobacter tengcongensis).